A 245-amino-acid chain; its full sequence is 1-(5-phosphoribosyl)-5-[(5-phosphoribosylamino)methylideneamino] imidazole-4-carboxamide isomerase (245 aa).

Aspartate 11 acts as the Proton acceptor in catalysis. Residue aspartate 132 is the Proton donor of the active site.

It belongs to the HisA/HisF family.

The protein localises to the cytoplasm. It carries out the reaction 1-(5-phospho-beta-D-ribosyl)-5-[(5-phospho-beta-D-ribosylamino)methylideneamino]imidazole-4-carboxamide = 5-[(5-phospho-1-deoxy-D-ribulos-1-ylimino)methylamino]-1-(5-phospho-beta-D-ribosyl)imidazole-4-carboxamide. It participates in amino-acid biosynthesis; L-histidine biosynthesis; L-histidine from 5-phospho-alpha-D-ribose 1-diphosphate: step 4/9. In Bacillus licheniformis (strain ATCC 14580 / DSM 13 / JCM 2505 / CCUG 7422 / NBRC 12200 / NCIMB 9375 / NCTC 10341 / NRRL NRS-1264 / Gibson 46), this protein is 1-(5-phosphoribosyl)-5-[(5-phosphoribosylamino)methylideneamino] imidazole-4-carboxamide isomerase.